The primary structure comprises 150 residues: uncharacterized protein (150 aa).

A run of 4 helical transmembrane segments spans residues 12–30, 40–62, 74–96, and 106–128; these read IVQRIISLLTIILLAYFLF, RLLSLATIVLLASFLFIIFLVLF, IRRTIAIVTTSFYFGTLSMVLSG, and ALIDGLKWAFMVVVAFYFGSRAV.

The protein resides in the cell membrane. This is an uncharacterized protein from Archaeoglobus fulgidus (strain ATCC 49558 / DSM 4304 / JCM 9628 / NBRC 100126 / VC-16).